We begin with the raw amino-acid sequence, 252 residues long: Large ribosomal subunit protein uL29m (252 aa).

K146 is modified (N6-acetyllysine). Basic residues predominate over residues 230-240 (KKKEKILHAKF). Residues 230–252 (KKKEKILHAKFPHLSQERKSSSV) are disordered.

It belongs to the universal ribosomal protein uL29 family. In terms of assembly, component of the mitochondrial ribosome large subunit (39S) which comprises a 16S rRNA and about 50 distinct proteins.

The protein resides in the mitochondrion. In Mus musculus (Mouse), this protein is Large ribosomal subunit protein uL29m (Mrpl47).